The primary structure comprises 123 residues: Large ribosomal subunit protein uL14 (123 aa).

It belongs to the universal ribosomal protein uL14 family. As to quaternary structure, part of the 50S ribosomal subunit. Forms a cluster with proteins L3 and L19. In the 70S ribosome, L14 and L19 interact and together make contacts with the 16S rRNA in bridges B5 and B8.

Binds to 23S rRNA. Forms part of two intersubunit bridges in the 70S ribosome. The protein is Large ribosomal subunit protein uL14 of Zymomonas mobilis subsp. mobilis (strain ATCC 31821 / ZM4 / CP4).